The primary structure comprises 684 residues: MDKKQAVAEIIRLREEIDRHNYRYYVLARPEISDFQYDAMLEKLVALEGEFPELKTSDSPSQRVGGGITKEFPTVEHREPMLSLSNTYSIEEVGEFYHRVVKLLPEEHRDSPEFVAELKFDGVAVSLLYRDGLLVRGATRGDGSQGDDITGNIRTIRSVPLRLGNPSGSGEGVERYEGREIEVRGEVFMTKTDFAVLNEGRPEEERFANPRNATAGTLKLQDSGEVSRRKMVFVAYYLKESSAEIISHAERLELLERLGFYTGGEHRVCRTLKDIREYIDGWQKKRLTGLPYEIDGIVLKLNNTALRDELGATSKSPRWAIAYKFPAERARTVIRSIVFQVGRLGTITPVAELEPVRLAGTTVSRSTLHNLEEVERLDVRLHDTVVIEKSGEIIPKVISVVEEKRRPGTLPVVVPESCPSCGTPLVKPPNEVHYYCPNSEGCPAQTKARIEHFASRNAMDINGLGKAIVEQLVSSGMVVDAGDLYRLTPDLIMRLDRQAEKSAGNLVNAIAKSRNREYFRVLFALGIRHVGIATARELAGAYPTLDMLCKASVEALSDVTDVGPVIAESVHAFFRKPSATAMIEKLREAGVRLEAEKTKKPVNLNFDGMKVIFTGALERYTRDEAAGLVRERGGKTVASVSKNTNLVVYGKEPGSKLEKARKLGVRVITESEFEEMLGEVGSNE.

NAD(+) contacts are provided by residues 34 to 38 (DFQYD), 83 to 84 (SL), and Glu117. Lys119 serves as the catalytic N6-AMP-lysine intermediate. NAD(+)-binding residues include Arg140, Glu186, Lys300, and Lys324. 4 residues coordinate Zn(2+): Cys418, Cys421, Cys436, and Cys442. Positions 601–684 (PVNLNFDGMK…EMLGEVGSNE (84 aa)) constitute a BRCT domain.

Belongs to the NAD-dependent DNA ligase family. LigA subfamily. Requires Mg(2+) as cofactor. The cofactor is Mn(2+).

It catalyses the reaction NAD(+) + (deoxyribonucleotide)n-3'-hydroxyl + 5'-phospho-(deoxyribonucleotide)m = (deoxyribonucleotide)n+m + AMP + beta-nicotinamide D-nucleotide.. DNA ligase that catalyzes the formation of phosphodiester linkages between 5'-phosphoryl and 3'-hydroxyl groups in double-stranded DNA using NAD as a coenzyme and as the energy source for the reaction. It is essential for DNA replication and repair of damaged DNA. The polypeptide is DNA ligase (Chlorobium phaeobacteroides (strain BS1)).